The sequence spans 330 residues: Aspartate--ammonia ligase (330 aa).

It belongs to the class-II aminoacyl-tRNA synthetase family. AsnA subfamily.

Its subcellular location is the cytoplasm. It catalyses the reaction L-aspartate + NH4(+) + ATP = L-asparagine + AMP + diphosphate + H(+). Its pathway is amino-acid biosynthesis; L-asparagine biosynthesis; L-asparagine from L-aspartate (ammonia route): step 1/1. The sequence is that of Aspartate--ammonia ligase from Escherichia coli O7:K1 (strain IAI39 / ExPEC).